The following is a 597-amino-acid chain: Arginine--tRNA ligase (597 aa).

The 'HIGH' region signature appears at 138–148; sequence ANPTGPMHVGH.

It belongs to the class-I aminoacyl-tRNA synthetase family. In terms of assembly, monomer.

The protein resides in the cytoplasm. The catalysed reaction is tRNA(Arg) + L-arginine + ATP = L-arginyl-tRNA(Arg) + AMP + diphosphate. This chain is Arginine--tRNA ligase, found in Nitrobacter hamburgensis (strain DSM 10229 / NCIMB 13809 / X14).